Here is a 112-residue protein sequence, read N- to C-terminus: Secretoglobin family 2B member 20 (112 aa).

A signal peptide spans Met1–Ala23. N-linked (GlcNAc...) asparagine glycosylation is present at Asn50.

The protein belongs to the secretoglobin family. As to expression, expressed in lacrimal gland, at higher level in males than females. Expressed in the submandibular gland.

Its subcellular location is the secreted. This Mus musculus (Mouse) protein is Secretoglobin family 2B member 20 (Scgb2b20).